The following is a 401-amino-acid chain: Dual-specificity RNA methyltransferase RlmN (401 aa).

E114 (proton acceptor) is an active-site residue. In terms of domain architecture, Radical SAM core spans 120-365 (DKGRGTLCVS…TIVRRTRGDD (246 aa)). C127 and C370 are oxidised to a cystine. [4Fe-4S] cluster contacts are provided by C134, C138, and C141. Residues 187–188 (GE), S219, 241–243 (SLH), and N327 each bind S-adenosyl-L-methionine. The active-site S-methylcysteine intermediate is C370.

This sequence belongs to the radical SAM superfamily. RlmN family. Requires [4Fe-4S] cluster as cofactor.

It is found in the cytoplasm. The catalysed reaction is adenosine(2503) in 23S rRNA + 2 reduced [2Fe-2S]-[ferredoxin] + 2 S-adenosyl-L-methionine = 2-methyladenosine(2503) in 23S rRNA + 5'-deoxyadenosine + L-methionine + 2 oxidized [2Fe-2S]-[ferredoxin] + S-adenosyl-L-homocysteine. It carries out the reaction adenosine(37) in tRNA + 2 reduced [2Fe-2S]-[ferredoxin] + 2 S-adenosyl-L-methionine = 2-methyladenosine(37) in tRNA + 5'-deoxyadenosine + L-methionine + 2 oxidized [2Fe-2S]-[ferredoxin] + S-adenosyl-L-homocysteine. Its function is as follows. Specifically methylates position 2 of adenine 2503 in 23S rRNA and position 2 of adenine 37 in tRNAs. m2A2503 modification seems to play a crucial role in the proofreading step occurring at the peptidyl transferase center and thus would serve to optimize ribosomal fidelity. The sequence is that of Dual-specificity RNA methyltransferase RlmN from Xanthomonas oryzae pv. oryzae (strain MAFF 311018).